Reading from the N-terminus, the 321-residue chain is Lipoyl synthase (321 aa).

Positions 68, 73, 79, 94, 98, 101, and 308 each coordinate [4Fe-4S] cluster. The region spanning 80-297 is the Radical SAM core domain; that stretch reads FNHGTATFMI…KEIALELGFT (218 aa).

This sequence belongs to the radical SAM superfamily. Lipoyl synthase family. Requires [4Fe-4S] cluster as cofactor.

The protein resides in the cytoplasm. It carries out the reaction [[Fe-S] cluster scaffold protein carrying a second [4Fe-4S](2+) cluster] + N(6)-octanoyl-L-lysyl-[protein] + 2 oxidized [2Fe-2S]-[ferredoxin] + 2 S-adenosyl-L-methionine + 4 H(+) = [[Fe-S] cluster scaffold protein] + N(6)-[(R)-dihydrolipoyl]-L-lysyl-[protein] + 4 Fe(3+) + 2 hydrogen sulfide + 2 5'-deoxyadenosine + 2 L-methionine + 2 reduced [2Fe-2S]-[ferredoxin]. The protein operates within protein modification; protein lipoylation via endogenous pathway; protein N(6)-(lipoyl)lysine from octanoyl-[acyl-carrier-protein]: step 2/2. Its function is as follows. Catalyzes the radical-mediated insertion of two sulfur atoms into the C-6 and C-8 positions of the octanoyl moiety bound to the lipoyl domains of lipoate-dependent enzymes, thereby converting the octanoylated domains into lipoylated derivatives. The chain is Lipoyl synthase from Aliivibrio fischeri (strain ATCC 700601 / ES114) (Vibrio fischeri).